The sequence spans 259 residues: Flagellar L-ring protein (259 aa).

The N-terminal stretch at 1–15 (MKRISLIALVTLMSG) is a signal peptide. Cys-16 carries N-palmitoyl cysteine lipidation. Residue Cys-16 is the site of S-diacylglycerol cysteine attachment.

It belongs to the FlgH family. In terms of assembly, the basal body constitutes a major portion of the flagellar organelle and consists of four rings (L,P,S, and M) mounted on a central rod.

The protein resides in the cell outer membrane. It localises to the bacterial flagellum basal body. Its function is as follows. Assembles around the rod to form the L-ring and probably protects the motor/basal body from shearing forces during rotation. This chain is Flagellar L-ring protein, found in Vibrio vulnificus (strain YJ016).